Reading from the N-terminus, the 95-residue chain is Phosphoribosyl-ATP pyrophosphatase (95 aa).

This sequence belongs to the PRA-PH family.

The protein localises to the cytoplasm. It catalyses the reaction 1-(5-phospho-beta-D-ribosyl)-ATP + H2O = 1-(5-phospho-beta-D-ribosyl)-5'-AMP + diphosphate + H(+). It participates in amino-acid biosynthesis; L-histidine biosynthesis; L-histidine from 5-phospho-alpha-D-ribose 1-diphosphate: step 2/9. The chain is Phosphoribosyl-ATP pyrophosphatase from Methanosphaera stadtmanae (strain ATCC 43021 / DSM 3091 / JCM 11832 / MCB-3).